Reading from the N-terminus, the 549-residue chain is Glucoamylase, intracellular sporulation-specific (549 aa).

Residue W198 coordinates substrate. D261 serves as the catalytic Proton acceptor. Catalysis depends on E264, which acts as the Proton donor.

The protein belongs to the glycosyl hydrolase 15 family.

The enzyme catalyses Hydrolysis of terminal (1-&gt;4)-linked alpha-D-glucose residues successively from non-reducing ends of the chains with release of beta-D-glucose.. The sequence is that of Glucoamylase, intracellular sporulation-specific (SGA1) from Saccharomyces cerevisiae (strain ATCC 204508 / S288c) (Baker's yeast).